Here is a 218-residue protein sequence, read N- to C-terminus: Phosphoglycolate phosphatase (218 aa).

Catalysis depends on Asp-7, which acts as the Nucleophile. Mg(2+) contacts are provided by Asp-7, Asp-9, and Asp-167.

This sequence belongs to the HAD-like hydrolase superfamily. CbbY/CbbZ/Gph/YieH family. Requires Mg(2+) as cofactor.

The catalysed reaction is 2-phosphoglycolate + H2O = glycolate + phosphate. It functions in the pathway organic acid metabolism; glycolate biosynthesis; glycolate from 2-phosphoglycolate: step 1/1. Functionally, specifically catalyzes the dephosphorylation of 2-phosphoglycolate. Is involved in the dissimilation of the intracellular 2-phosphoglycolate formed during the DNA repair of 3'-phosphoglycolate ends, a major class of DNA lesions induced by oxidative stress. In Cereibacter sphaeroides (Rhodobacter sphaeroides), this protein is Phosphoglycolate phosphatase.